The chain runs to 30 residues: NADH-ubiquinone oxidoreductase chain 5 (30 aa).

Residues 7–27 traverse the membrane as a helical segment; that stretch reads NIIIIINSSLIIILFSSIFFF.

The protein belongs to the complex I subunit 5 family.

The protein localises to the mitochondrion inner membrane. The catalysed reaction is a ubiquinone + NADH + 5 H(+)(in) = a ubiquinol + NAD(+) + 4 H(+)(out). Functionally, core subunit of the mitochondrial membrane respiratory chain NADH dehydrogenase (Complex I) that is believed to belong to the minimal assembly required for catalysis. Complex I functions in the transfer of electrons from NADH to the respiratory chain. The immediate electron acceptor for the enzyme is believed to be ubiquinone. The chain is NADH-ubiquinone oxidoreductase chain 5 (ND5) from Pisaster ochraceus (Ochre sea star).